A 56-amino-acid polypeptide reads, in one-letter code: uncharacterized protein (56 aa).

This is an uncharacterized protein from Haemophilus influenzae (strain ATCC 51907 / DSM 11121 / KW20 / Rd).